A 411-amino-acid polypeptide reads, in one-letter code: Dual-specificity RNA methyltransferase RlmN (411 aa).

Catalysis depends on glutamate 124, which acts as the Proton acceptor. The Radical SAM core domain occupies 130–379; that stretch reads EEGRGTLCIS…IRTPRGRDIL (250 aa). Cysteine 137 and cysteine 382 are joined by a disulfide. Cysteine 144, cysteine 148, and cysteine 151 together coordinate [4Fe-4S] cluster. S-adenosyl-L-methionine is bound by residues 208 to 209, serine 240, 262 to 264, and asparagine 339; these read GE and SLH. The active-site S-methylcysteine intermediate is the cysteine 382.

It belongs to the radical SAM superfamily. RlmN family. [4Fe-4S] cluster serves as cofactor.

It is found in the cytoplasm. The enzyme catalyses adenosine(2503) in 23S rRNA + 2 reduced [2Fe-2S]-[ferredoxin] + 2 S-adenosyl-L-methionine = 2-methyladenosine(2503) in 23S rRNA + 5'-deoxyadenosine + L-methionine + 2 oxidized [2Fe-2S]-[ferredoxin] + S-adenosyl-L-homocysteine. It catalyses the reaction adenosine(37) in tRNA + 2 reduced [2Fe-2S]-[ferredoxin] + 2 S-adenosyl-L-methionine = 2-methyladenosine(37) in tRNA + 5'-deoxyadenosine + L-methionine + 2 oxidized [2Fe-2S]-[ferredoxin] + S-adenosyl-L-homocysteine. In terms of biological role, specifically methylates position 2 of adenine 2503 in 23S rRNA and position 2 of adenine 37 in tRNAs. m2A2503 modification seems to play a crucial role in the proofreading step occurring at the peptidyl transferase center and thus would serve to optimize ribosomal fidelity. The protein is Dual-specificity RNA methyltransferase RlmN of Sinorhizobium fredii (strain NBRC 101917 / NGR234).